We begin with the raw amino-acid sequence, 81 residues long: Exodeoxyribonuclease 7 small subunit (81 aa).

It belongs to the XseB family. In terms of assembly, heterooligomer composed of large and small subunits.

It is found in the cytoplasm. It catalyses the reaction Exonucleolytic cleavage in either 5'- to 3'- or 3'- to 5'-direction to yield nucleoside 5'-phosphates.. In terms of biological role, bidirectionally degrades single-stranded DNA into large acid-insoluble oligonucleotides, which are then degraded further into small acid-soluble oligonucleotides. The polypeptide is Exodeoxyribonuclease 7 small subunit (Pseudomonas syringae pv. syringae (strain B728a)).